Here is a 59-residue protein sequence, read N- to C-terminus: uncharacterized protein (59 aa).

The protein localises to the mitochondrion. This is an uncharacterized protein from Ascobolus immersus.